A 305-amino-acid polypeptide reads, in one-letter code: UDP-3-O-acyl-N-acetylglucosamine deacetylase (305 aa).

Residues H79, H238, and D242 each coordinate Zn(2+). H265 serves as the catalytic Proton donor.

This sequence belongs to the LpxC family. Requires Zn(2+) as cofactor.

The catalysed reaction is a UDP-3-O-[(3R)-3-hydroxyacyl]-N-acetyl-alpha-D-glucosamine + H2O = a UDP-3-O-[(3R)-3-hydroxyacyl]-alpha-D-glucosamine + acetate. The protein operates within glycolipid biosynthesis; lipid IV(A) biosynthesis; lipid IV(A) from (3R)-3-hydroxytetradecanoyl-[acyl-carrier-protein] and UDP-N-acetyl-alpha-D-glucosamine: step 2/6. Its function is as follows. Catalyzes the hydrolysis of UDP-3-O-myristoyl-N-acetylglucosamine to form UDP-3-O-myristoylglucosamine and acetate, the committed step in lipid A biosynthesis. The chain is UDP-3-O-acyl-N-acetylglucosamine deacetylase from Vibrio parahaemolyticus serotype O3:K6 (strain RIMD 2210633).